The sequence spans 342 residues: Photosystem II assembly lipoprotein Ycf48 (342 aa).

Residues 1–28 (MPVKFPSLKFEQLKQLVLVAAIAVFCVS) form the signal peptide. Cys29 carries N-palmitoyl cysteine lipidation. Cys29 carries the S-diacylglycerol cysteine lipid modification. Residues 196-220 (RGNFYSTWAPGQTEWTPHNRNSSRR) carry the Arg-rich patch motif. A propeptide spanning residues 340–342 (MVP) is cleaved from the precursor.

This sequence belongs to the Ycf48 family. As to quaternary structure, part of early PSII assembly complexes which includes D1 (psbA) and PsbI; not found in mature PSII. By two-hybrid analysis in yeast interacts with precursor and intermediate forms of D1, but less with mature D1. Binds to the lumenal side of PSI and PSII complexes. Coimmunoprecipitates with YidC. Purified chlorophyll- and carotenoid-containing photosystem II (PSII) assembly intermediate complex RCII* (iD1, D1, D2, PsbE, PsbF, PsbI, Ycf39, Ycf48, HliC and HliD). The last 3 residues are removed in the mature protein.

It is found in the cellular thylakoid membrane. In terms of biological role, a factor required for optimal assembly of photosystem II (PSII) which acts in the early stages of PSII assembly. Also plays a role in replacement of photodamaged D1 (psbA). May interact with precursor D1 to prevent its premature processing before association with D2 (psbD). May also play a role in chlorophyll insertion into chlorophyll-binding proteins. Increasing levels of chlorophyll precursors partially suppresses deletion of this protein, supporting the idea that Ycf48 assists YidC in synthesis of chlorophyll-binding proteins. The Ycf39-Hlip complex binds D1 at an early stage of PSII assembly along with Ycf48, ribosomes and ChlG, the last enzyme in chlorophyll biosynthesis; it may be involved in chlorophyll reuse and delivery to D1 in the initial stages of PSII assembly. This chain is Photosystem II assembly lipoprotein Ycf48, found in Synechocystis sp. (strain ATCC 27184 / PCC 6803 / Kazusa).